A 182-amino-acid chain; its full sequence is Plasmolipin (182 aa).

The Cytoplasmic segment spans residues 1–35 (MAEFPSKVSTRTSSPAQGVGASVSALRPDLGFVRS). S9 carries the post-translational modification Phosphoserine. In terms of domain architecture, MARVEL spans 32–166 (FVRSALGVLA…SAFFSFQAWR (135 aa)). Residues 36-56 (ALGVLALLQLALGLLVWALIA) form a helical membrane-spanning segment. At 57–68 (DTPYHLYPAYGW) the chain is on the extracellular side. Residues 69 to 89 (VMFVAVFLWLVTIVFFIIYLF) form a helical membrane-spanning segment. Over 90–99 (QLHMKLYMVP) the chain is Cytoplasmic. A helical membrane pass occupies residues 100–120 (WPLVLLIFFVAATVLYITAFI). Residues 121-141 (ACAAAVDLTSLRGSRPYNQRS) lie on the Extracellular side of the membrane. Residues 142 to 162 (AASFFACLVMIAYGVSAFFSF) form a helical membrane-spanning segment. The Cytoplasmic portion of the chain corresponds to 163 to 182 (QAWRGVGSNAATSQMAGGYS).

Belongs to the MAL family. In terms of assembly, forms oligomers. Post-translationally, phosphorylated.

The protein resides in the membrane. It is found in the cell membrane. It localises to the myelin membrane. Its subcellular location is the apical cell membrane. Main component of the myelin sheath that plays an important role in myelin membrane biogenesis and myelination. Plays an essential function in apical endocytosis. Regulates epithelial development through the regulation of apical endocytosis. Part of the intracellular machinery that mediates basolateral-to-apical transport of ICAM-1, an essential adhesion receptor in epithelial cells, from the subapical compartment in hepatic epithelial cells. The polypeptide is Plasmolipin (Pllp) (Mus musculus (Mouse)).